The following is a 425-amino-acid chain: Light-independent protochlorophyllide reductase subunit N (425 aa).

Residues cysteine 17, cysteine 42, and cysteine 103 each coordinate [4Fe-4S] cluster.

The protein belongs to the BchN/ChlN family. As to quaternary structure, protochlorophyllide reductase is composed of three subunits; ChlL, ChlN and ChlB. Forms a heterotetramer of two ChlB and two ChlN subunits. [4Fe-4S] cluster serves as cofactor.

The catalysed reaction is chlorophyllide a + oxidized 2[4Fe-4S]-[ferredoxin] + 2 ADP + 2 phosphate = protochlorophyllide a + reduced 2[4Fe-4S]-[ferredoxin] + 2 ATP + 2 H2O. The protein operates within porphyrin-containing compound metabolism; chlorophyll biosynthesis (light-independent). Functionally, component of the dark-operative protochlorophyllide reductase (DPOR) that uses Mg-ATP and reduced ferredoxin to reduce ring D of protochlorophyllide (Pchlide) to form chlorophyllide a (Chlide). This reaction is light-independent. The NB-protein (ChlN-ChlB) is the catalytic component of the complex. This Parasynechococcus marenigrum (strain WH8102) protein is Light-independent protochlorophyllide reductase subunit N.